The following is a 110-amino-acid chain: UPF0122 protein SERP0802 (110 aa).

The protein belongs to the UPF0122 family.

In terms of biological role, might take part in the signal recognition particle (SRP) pathway. This is inferred from the conservation of its genetic proximity to ftsY/ffh. May be a regulatory protein. This chain is UPF0122 protein SERP0802, found in Staphylococcus epidermidis (strain ATCC 35984 / DSM 28319 / BCRC 17069 / CCUG 31568 / BM 3577 / RP62A).